A 218-amino-acid polypeptide reads, in one-letter code: Replication protein RepB (218 aa).

A disordered region spans residues 1–26; it reads MKSESKIDWTVPRPNKNPKTKQPYKR. Over residues 16 to 26 the composition is skewed to basic residues; it reads KNPKTKQPYKR.

The protein belongs to the Gram-positive plasmids replication protein type 2 family.

In terms of biological role, is essential for plasmid replication. Nicks the positive strand at the plus origin of replication. This chain is Replication protein RepB (repB), found in Lactiplantibacillus plantarum (Lactobacillus plantarum).